Reading from the N-terminus, the 728-residue chain is Phosphoribosylformylglycinamidine synthase subunit PurL (728 aa).

H42 is a catalytic residue. 2 residues coordinate ATP: Y45 and K84. A Mg(2+)-binding site is contributed by E86. Substrate-binding positions include S87–H90 and R109. H88 serves as the catalytic Proton acceptor. D110 lines the Mg(2+) pocket. Residue Q237 participates in substrate binding. Residue D265 participates in Mg(2+) binding. E309 to Q311 contributes to the substrate binding site. ATP-binding residues include D491 and G528. N529 serves as a coordination point for Mg(2+). Residue S531 coordinates substrate.

The protein belongs to the FGAMS family. As to quaternary structure, monomer. Part of the FGAM synthase complex composed of 1 PurL, 1 PurQ and 2 PurS subunits.

The protein resides in the cytoplasm. The catalysed reaction is N(2)-formyl-N(1)-(5-phospho-beta-D-ribosyl)glycinamide + L-glutamine + ATP + H2O = 2-formamido-N(1)-(5-O-phospho-beta-D-ribosyl)acetamidine + L-glutamate + ADP + phosphate + H(+). It functions in the pathway purine metabolism; IMP biosynthesis via de novo pathway; 5-amino-1-(5-phospho-D-ribosyl)imidazole from N(2)-formyl-N(1)-(5-phospho-D-ribosyl)glycinamide: step 1/2. Functionally, part of the phosphoribosylformylglycinamidine synthase complex involved in the purines biosynthetic pathway. Catalyzes the ATP-dependent conversion of formylglycinamide ribonucleotide (FGAR) and glutamine to yield formylglycinamidine ribonucleotide (FGAM) and glutamate. The FGAM synthase complex is composed of three subunits. PurQ produces an ammonia molecule by converting glutamine to glutamate. PurL transfers the ammonia molecule to FGAR to form FGAM in an ATP-dependent manner. PurS interacts with PurQ and PurL and is thought to assist in the transfer of the ammonia molecule from PurQ to PurL. The polypeptide is Phosphoribosylformylglycinamidine synthase subunit PurL (Campylobacter jejuni subsp. doylei (strain ATCC BAA-1458 / RM4099 / 269.97)).